The primary structure comprises 354 residues: uncharacterized protein (354 aa).

Positions 309–326 are enriched in polar residues; sequence VNSANSINTANTRSQTGG. Residues 309-333 are disordered; the sequence is VNSANSINTANTRSQTGGQDEEDFE. The stretch at 326–353 forms a coiled coil; that stretch reads GQDEEDFEKKYKKYKNKYAKLKNQKTSN.

The protein resides in the virion. This is an uncharacterized protein from Acanthamoeba polyphaga (Amoeba).